A 631-amino-acid polypeptide reads, in one-letter code: Probable electron transfer flavoprotein-ubiquinone oxidoreductase, mitochondrial (631 aa).

65-79 (VCIVGGGPAGLATAI) is a binding site for FAD. The [4Fe-4S] cluster site is built by Cys-574, Cys-600, Cys-603, and Cys-606. Residues 591-620 (TRLQINSQNCIHCKTCDIKAPRQDITWKVP) enclose the 4Fe-4S ferredoxin-type domain.

This sequence belongs to the ETF-QO/FixC family. Requires [4Fe-4S] cluster as cofactor. FAD is required as a cofactor.

Its subcellular location is the mitochondrion inner membrane. The catalysed reaction is a ubiquinone + reduced [electron-transfer flavoprotein] = a ubiquinol + oxidized [electron-transfer flavoprotein] + H(+). In terms of biological role, accepts electrons from ETF and reduces ubiquinone. The chain is Probable electron transfer flavoprotein-ubiquinone oxidoreductase, mitochondrial (CIR2) from Saccharomyces cerevisiae (strain ATCC 204508 / S288c) (Baker's yeast).